Here is a 505-residue protein sequence, read N- to C-terminus: AAA-ATPase At5g17760 (505 aa).

Residues 11–27 (TSVFTAYASMAGYMMMI) form a helical membrane-spanning segment. Positions 136–155 (GGGGGVGGRGGGGGRRGGMD) are disordered. Residues 137-151 (GGGGVGGRGGGGGRR) show a composition bias toward gly residues. 260 to 267 (GPPGTGKS) provides a ligand contact to ATP.

The protein belongs to the AAA ATPase family. BCS1 subfamily. Mg(2+) serves as cofactor.

Its subcellular location is the membrane. The enzyme catalyses ATP + H2O = ADP + phosphate + H(+). The protein is AAA-ATPase At5g17760 of Arabidopsis thaliana (Mouse-ear cress).